The chain runs to 388 residues: LL-diaminopimelate aminotransferase (388 aa).

Substrate-binding residues include tyrosine 13, glycine 38, lysine 102, tyrosine 126, and asparagine 176. Pyridoxal 5'-phosphate contacts are provided by residues 101–102 (SK), tyrosine 126, asparagine 176, tyrosine 207, and 235–237 (SLS). Position 238 is an N6-(pyridoxal phosphate)lysine (lysine 238). Arginine 246 contacts pyridoxal 5'-phosphate. Arginine 364 is a binding site for substrate.

Belongs to the class-I pyridoxal-phosphate-dependent aminotransferase family. LL-diaminopimelate aminotransferase subfamily. In terms of assembly, homodimer. It depends on pyridoxal 5'-phosphate as a cofactor.

The enzyme catalyses (2S,6S)-2,6-diaminopimelate + 2-oxoglutarate = (S)-2,3,4,5-tetrahydrodipicolinate + L-glutamate + H2O + H(+). It functions in the pathway amino-acid biosynthesis; L-lysine biosynthesis via DAP pathway; LL-2,6-diaminopimelate from (S)-tetrahydrodipicolinate (aminotransferase route): step 1/1. Involved in the synthesis of meso-diaminopimelate (m-DAP or DL-DAP), required for both lysine and peptidoglycan biosynthesis. Catalyzes the direct conversion of tetrahydrodipicolinate to LL-diaminopimelate. This is LL-diaminopimelate aminotransferase from Dehalococcoides mccartyi (strain ATCC BAA-2266 / KCTC 15142 / 195) (Dehalococcoides ethenogenes (strain 195)).